We begin with the raw amino-acid sequence, 384 residues long: Galactokinase (384 aa).

Residue 35 to 38 participates in substrate binding; it reads EHTD. ATP is bound by residues S69 and 125–131; that span reads GAGLSSS. 2 residues coordinate Mg(2+): S131 and E163. D175 (proton acceptor) is an active-site residue. Y224 provides a ligand contact to substrate.

The protein belongs to the GHMP kinase family. GalK subfamily.

The protein resides in the cytoplasm. It carries out the reaction alpha-D-galactose + ATP = alpha-D-galactose 1-phosphate + ADP + H(+). It participates in carbohydrate metabolism; galactose metabolism. In terms of biological role, catalyzes the transfer of the gamma-phosphate of ATP to D-galactose to form alpha-D-galactose-1-phosphate (Gal-1-P). This Aliivibrio fischeri (strain ATCC 700601 / ES114) (Vibrio fischeri) protein is Galactokinase.